A 111-amino-acid polypeptide reads, in one-letter code: Probable 4-amino-4-deoxy-L-arabinose-phosphoundecaprenol flippase subunit ArnE (111 aa).

Residues 1 to 37 lie on the Cytoplasmic side of the membrane; the sequence is MIWLTLVFASLLSVAGQLCQKQATCFVAINKRRKHIA. The chain crosses the membrane as a helical span at residues 38-58; the sequence is LWLGLALACLGLAMVLWLLVL. Positions 40–109 constitute an EamA domain; it reads LGLALACLGL…IIGGIVILGS (70 aa). Residues 59–60 are Periplasmic-facing; that stretch reads QN. A helical transmembrane segment spans residues 61–81; it reads VPVGIAYPMLSLNFVWVTLAA. Topologically, residues 82 to 87 are cytoplasmic; it reads VKLWHE. Residues 88 to 108 traverse the membrane as a helical segment; that stretch reads PVSPRHWCGVAFIIGGIVILG. Residues 109–111 are Periplasmic-facing; sequence STV.

The protein belongs to the ArnE family. Heterodimer of ArnE and ArnF.

The protein localises to the cell inner membrane. Its pathway is bacterial outer membrane biogenesis; lipopolysaccharide biosynthesis. Translocates 4-amino-4-deoxy-L-arabinose-phosphoundecaprenol (alpha-L-Ara4N-phosphoundecaprenol) from the cytoplasmic to the periplasmic side of the inner membrane. This is Probable 4-amino-4-deoxy-L-arabinose-phosphoundecaprenol flippase subunit ArnE from Escherichia coli (strain 55989 / EAEC).